The chain runs to 932 residues: Isoleucine--tRNA ligase (932 aa).

The 'HIGH' region signature appears at 58 to 68 (PYANGDIHIGH). Residue Glu-570 participates in L-isoleucyl-5'-AMP binding. The 'KMSKS' region signature appears at 611–615 (KMSKS). Lys-614 contacts ATP. Zn(2+) is bound by residues Cys-895, Cys-898, Cys-915, and Cys-918.

Belongs to the class-I aminoacyl-tRNA synthetase family. IleS type 1 subfamily. Monomer. It depends on Zn(2+) as a cofactor.

It is found in the cytoplasm. It carries out the reaction tRNA(Ile) + L-isoleucine + ATP = L-isoleucyl-tRNA(Ile) + AMP + diphosphate. Catalyzes the attachment of isoleucine to tRNA(Ile). As IleRS can inadvertently accommodate and process structurally similar amino acids such as valine, to avoid such errors it has two additional distinct tRNA(Ile)-dependent editing activities. One activity is designated as 'pretransfer' editing and involves the hydrolysis of activated Val-AMP. The other activity is designated 'posttransfer' editing and involves deacylation of mischarged Val-tRNA(Ile). The sequence is that of Isoleucine--tRNA ligase from Dechloromonas aromatica (strain RCB).